The sequence spans 720 residues: MMTEVHDAGRPRVVIFNGSQLQREAIIPFASRSSCFHHQLCSRGHLLIIFLLLVSPFNDAAVDVDGDDNDNLIIDHVPDAKSSSEALLNFKSSLSTSSPRGHEVLGSWIPSNSPCSGNNGNWLGVLCYEGDVWGLQLENLDLSGVIDIDSLLPLHFLRTLSFMNNSFKGQCLIGISLEPSSHCTCPIIASPVRSRMMLPGYDLSQEALFGKQPIQRQHPHLPGYLLPQVFELSLENNRFTGSIPHFPPNVLKVLNLSNNQLEGPIPPALSLMDPTTFSGNKGLCGKPLESACNSPSQEANNPDSRNSSTISGQSSTDVIRKSPTRLSKVMLIVAVCLVVLCLLIVLILIIRRRSHSSSQNPQPVESNYSNNDRDQNAFTSSAPDDHVTLSGNSTYSNNQHSNSNKAEAPTAAVVGKLSFVRDDRPRFDLQDLLRASAEVLGSGNLGSSYKALLMDGQAVVVKRFKQMNHVAKEDFHEHMRRLGRLTHPNLLPLVAYYYRKEEKLLVYDYASNGSLASHLHGNQSRLDWSSRLKIVKGVAKALAYLHNELPSLALPHGHLKSSNVLLDKYLNPVLMDYTLVPLVNLAQVQHLLVAYKAPEYAQQGRITRKTDVWSLGILILETLTGKFPTNYLALSTGYGTELATWVDTIIRDNESAFDKEMNTTKDSQGQIRKLFDIGVACCQEDLDTRWDLKEVVQSIQSLNDKDHGHSNSDQMHDAGV.

Residues 40–64 (LCSRGHLLIIFLLLVSPFNDAAVDV) form an LRR 1; degenerate repeat. An LRR 2; degenerate repeat occupies 123-146 (LGVLCYEGDVWGLQLENLDLSGVI). LRR repeat units lie at residues 154–179 (LHFLRTLSFMNNSFKGQCLIGISLEP), 226–248 (LPQVFELSLENNRFTGSIPHFPP), and 249–273 (NVLKVLNLSNNQLEGPIPPALSLMD). The segment at 288–319 (LESACNSPSQEANNPDSRNSSTISGQSSTDVI) is disordered. Over residues 291–317 (ACNSPSQEANNPDSRNSSTISGQSSTD) the composition is skewed to polar residues. A helical membrane pass occupies residues 330-350 (MLIVAVCLVVLCLLIVLILII). 2 stretches are compositionally biased toward polar residues: residues 356–382 (SSSQNPQPVESNYSNNDRDQNAFTSSA) and 389–405 (LSGNSTYSNNQHSNSNK). The disordered stretch occupies residues 356–409 (SSSQNPQPVESNYSNNDRDQNAFTSSAPDDHVTLSGNSTYSNNQHSNSNKAEAP). The 269-residue stretch at 434 to 702 (RASAEVLGSG…KEVVQSIQSL (269 aa)) folds into the Protein kinase domain. Residues 440 to 448 (LGSGNLGSS) and Lys-462 contribute to the ATP site.

Belongs to the protein kinase superfamily. Interacts with KIP1. Post-translationally, autophosphorylated. In terms of tissue distribution, expressed in mature pollen grains and pollen tubes, but not in style, petal, leaf, root or sepal. Very low expression in the ovary.

The protein localises to the microsome membrane. Its subcellular location is the cytoplasm. It carries out the reaction L-seryl-[protein] + ATP = O-phospho-L-seryl-[protein] + ADP + H(+). The enzyme catalyses L-threonyl-[protein] + ATP = O-phospho-L-threonyl-[protein] + ADP + H(+). The catalysed reaction is L-tyrosyl-[protein] + ATP = O-phospho-L-tyrosyl-[protein] + ADP + H(+). In terms of biological role, dual-specificity kinase with both serine/threonine and tyrosine kinase activities. Required for postmeiotic development of microspores. Involved in embryo sac development at the late stages of megagametogenesis. Involved in the phosphorylation of KIP1. In Petunia integrifolia (Violet-flowered petunia), this protein is Pollen receptor-like kinase 1.